The sequence spans 103 residues: Matrix Gla protein (103 aa).

The N-terminal stretch at 1–19 (MRSLLLLTVLAALVVAILC) is a signal peptide. Glutamate 21 is modified (4-carboxyglutamate). Phosphoserine is present on residues serine 22, serine 25, and serine 28. Residues 51-97 (MAKAQERVREQRKPAYELNREACDDYKLCERYAMVYGYNAAYNRYFR) form the Gla domain. Residues glutamate 56, glutamate 60, glutamate 67, and glutamate 71 each carry the 4-carboxyglutamate modification. The cysteines at positions 73 and 79 are disulfide-linked.

The protein belongs to the osteocalcin/matrix Gla protein family. In terms of processing, requires vitamin K-dependent gamma-carboxylation for its function.

The protein resides in the secreted. In terms of biological role, associates with the organic matrix of bone and cartilage. Thought to act as an inhibitor of bone formation. In Oryctolagus cuniculus (Rabbit), this protein is Matrix Gla protein (MGP).